We begin with the raw amino-acid sequence, 549 residues long: MGNTCGVTLRSKYFASFRGASQRHDEAGYAPVATSAAAAAAADEPAGKKAPRGSAAAADAPHAASMKRGAPAPAELTANVLGHPTPSLSEHYALGRKLGQGQFGTTYLCTDLATGVDYACKSIAKRKLITKEDVEDVRREIQIMHHLAGHRNVVAIKGAYEDPQYVHIVMELCAGGELFDRIIERGQFSERKAAELTRIIVGVIEACHSLGVIHRDLKPENFLLANKDDDLSLKAIDFGLSVFFKPGQVFTDVVGSPYYVAPEVLRKCYGPEADVWTAGVILYILLSGVPPFWAETQQGIFDAVLKGVIDFDSDPWPVISDSAKDLIRRMLNPRPKERLTAHEVLCHPWICDHGVAPDRPLDPAVLSRIKQFSAMNKLKKMALRVIAESLSEEEIAGLKEMFKAMDTDNSGAITYDELKEGMRKYGSTLKDTEIRDLMEAADVDNSGTIDYIEFIAATLHLNKLEREEHLVAAFSYFDKDGSGYITVDELQQACKEHNMPDAFLDDVIKEADQDNDGRIDYGEFVAMMTKGNMGVGRRTMRNSLNISMR.

The N-myristoyl glycine moiety is linked to residue G2. The disordered stretch occupies residues 43–69; sequence DEPAGKKAPRGSAAAADAPHAASMKRG. The segment covering 52 to 64 has biased composition (low complexity); sequence RGSAAAADAPHAA. Positions 92-350 constitute a Protein kinase domain; the sequence is YALGRKLGQG…AHEVLCHPWI (259 aa). Residues 98–106 and K121 each bind ATP; that span reads LGQGQFGTT. D216 functions as the Proton acceptor in the catalytic mechanism. The autoinhibitory domain stretch occupies residues 356–386; that stretch reads APDRPLDPAVLSRIKQFSAMNKLKKMALRVI. 4 consecutive EF-hand domains span residues 393–428, 429–464, 465–500, and 501–534; these read EEIA…YGST, LKDT…LNKL, EREE…HNMP, and DAFL…GNMG. Ca(2+)-binding residues include D406, D408, S410, E417, D442, D444, S446, T448, E453, D478, D480, S482, Y484, E489, D512, D514, D516, R518, and E523.

This sequence belongs to the protein kinase superfamily. Ser/Thr protein kinase family. CDPK subfamily.

It localises to the membrane. The enzyme catalyses L-seryl-[protein] + ATP = O-phospho-L-seryl-[protein] + ADP + H(+). The catalysed reaction is L-threonyl-[protein] + ATP = O-phospho-L-threonyl-[protein] + ADP + H(+). With respect to regulation, activated by calcium. Autophosphorylation may play an important role in the regulation of the kinase activity. May play a role in signal transduction pathways that involve calcium as a second messenger. This chain is Calcium-dependent protein kinase 5, found in Oryza sativa subsp. japonica (Rice).